A 134-amino-acid polypeptide reads, in one-letter code: Large ribosomal subunit protein uL16c (134 aa).

The segment covering 1–17 has biased composition (basic residues); that stretch reads MLSPKRTRFRKQHRGRM. The tract at residues 1-21 is disordered; sequence MLSPKRTRFRKQHRGRMKGIS.

Belongs to the universal ribosomal protein uL16 family. Part of the 50S ribosomal subunit.

The protein localises to the plastid. It is found in the chloroplast. The polypeptide is Large ribosomal subunit protein uL16c (Solanum bulbocastanum (Wild potato)).